Here is a 1406-residue protein sequence, read N- to C-terminus: Ubiquitin carboxyl-terminal hydrolase 6 (1406 aa).

Residues 100–292 enclose the Rab-GAP TBC domain; it reads GIPMNIRGPV…RLWDVYLVEG (193 aa). The segment at 348-380 is disordered; the sequence is KLTRKQGDLPPPAKREQGSLAPRPVPASRGGKT. One can recognise a USP domain in the interval 532-1369; it reads TGLSNLGNTC…SAYILFYEQQ (838 aa). Cys541 serves as the catalytic Nucleophile. Positions 1120-1231 are disordered; that stretch reads HKPLTPQGDE…KKNLDASKEN (112 aa). Basic and acidic residues predominate over residues 1129–1155; it reads ELSKPRILAREVKKVDAQSSAGKEDML. Residues 1156 to 1197 show a composition bias toward low complexity; that stretch reads LSKSPSSLSANISSSPKGSPSSSRKSGTSCPSSKNSSPNSSP. The Proton acceptor role is filled by His1328. The tract at residues 1384 to 1406 is disordered; sequence KMADTSSTDEDSESDYEKYSMLQ.

This sequence belongs to the peptidase C19 family. Interacts with RAC1 and CDC42. Interacts (via Rab-GAP TBC domain) with ARF6. Interacts with calmodulin (CALM1, CALM2 and/or CALM3); the interaction is calcium-dependent. Post-translationally, monubiquitinated; ubiquitination is calmodulin and calcium dependent. In terms of tissue distribution, testis specific. Expressed in various cancer cell lines.

It is found in the cell membrane. The protein resides in the cytoplasm. The protein localises to the endosome. It catalyses the reaction Thiol-dependent hydrolysis of ester, thioester, amide, peptide and isopeptide bonds formed by the C-terminal Gly of ubiquitin (a 76-residue protein attached to proteins as an intracellular targeting signal).. Deubiquitinase with an ATP-independent isopeptidase activity, cleaving at the C-terminus of the ubiquitin moiety. Catalyzes its own deubiquitination. In vitro, isoform 2, but not isoform 3, shows deubiquitinating activity. Promotes plasma membrane localization of ARF6 and selectively regulates ARF6-dependent endocytic protein trafficking. Is able to initiate tumorigenesis by inducing the production of matrix metalloproteinases following NF-kappa-B activation. May act as a GTPase-activating protein for RAB3A. This Homo sapiens (Human) protein is Ubiquitin carboxyl-terminal hydrolase 6 (USP6).